Consider the following 588-residue polypeptide: Aspartate--tRNA(Asp/Asn) ligase (588 aa).

An L-aspartate-binding site is contributed by Glu-172. The aspartate stretch occupies residues 196–199; sequence QLFK. Position 218 (Arg-218) interacts with L-aspartate. Residues 218 to 220 and Gln-227 contribute to the ATP site; that span reads RDE. His-450 contacts L-aspartate. Position 484 (Glu-484) interacts with ATP. An L-aspartate-binding site is contributed by Arg-491. ATP is bound at residue 536 to 539; sequence GLDR.

This sequence belongs to the class-II aminoacyl-tRNA synthetase family. Type 1 subfamily. As to quaternary structure, homodimer.

Its subcellular location is the cytoplasm. It catalyses the reaction tRNA(Asx) + L-aspartate + ATP = L-aspartyl-tRNA(Asx) + AMP + diphosphate. Functionally, aspartyl-tRNA synthetase with relaxed tRNA specificity since it is able to aspartylate not only its cognate tRNA(Asp) but also tRNA(Asn). Reaction proceeds in two steps: L-aspartate is first activated by ATP to form Asp-AMP and then transferred to the acceptor end of tRNA(Asp/Asn). This Nitrosospira multiformis (strain ATCC 25196 / NCIMB 11849 / C 71) protein is Aspartate--tRNA(Asp/Asn) ligase.